The following is a 111-amino-acid chain: Dynein light chain Tctex-type (111 aa).

This sequence belongs to the dynein light chain Tctex-type family. The cytoplasmic dynein complex consists of two catalytic heavy chains (HCs) and a number of non-catalytic subunits presented by intermediate chains (ICs), light intermediate chains (LICs) and light chains (LCs).

It is found in the cytoplasm. The protein localises to the cytoskeleton. Its function is as follows. Acts as one of several non-catalytic accessory components of the cytoplasmic dynein complex that are thought to be involved in linking dynein to cargos and to adapter proteins that regulate dynein function. Cytoplasmic dynein acts as a motor for the intracellular retrograde motility of vesicles and organelles along microtubules. Required for spermatid differentiation. Is not required for polarized transport in rhabdomere development and appears to be a non-essential component of the cytoplasmic dynein complex. The chain is Dynein light chain Tctex-type (Dlc90F) from Drosophila melanogaster (Fruit fly).